Consider the following 456-residue polypeptide: MASSSGSNHICSRVIDHSHVPEFEVATWIKITLILVYLIIFVVGILGNSVTIRVTQVLQKKGYLQKEVTDHMVSLACSDILVFLIGMPMEFYSIIWNPLTTPSYALSCKLHTFLFETCSYATLLHVLTLSFERYIAICHPFKYKAVSGPRQVKLLIGFVWVTSALVALPLLFAMGIEYPLVNVPTHKGLNCNLSRTRHHDEPGNSNMSICTNLSNRWEVFQSSIFGAFAVYLVVLASVAFMCWNMMKVLMKSKQGTLAGTGPQLQLRKSESEESRTARRQTIIFLRLIVVTLAVCWMPNQIRRIMAAAKPKHDWTRTYFRAYMILLPFSDTFFYLSSVVNPLLYNVSSQQFRKVFWQVLCCRLTLQHANQEKRQRARFISTKDSTSSARSPLIFLASRRSNSSSRRTNKVFLSTFQTEAKPGEAKPQPLSPESPQTGSETKPAGSTTENSLQEQEV.

At 1–34 (MASSSGSNHICSRVIDHSHVPEFEVATWIKITLI) the chain is on the extracellular side. 2 disulfides stabilise this stretch: cysteine 11–cysteine 191 and cysteine 108–cysteine 210. Histidine 17 and histidine 19 together coordinate Zn(2+). Residues 35-55 (LVYLIIFVVGILGNSVTIRVT) form a helical membrane-spanning segment. At 56 to 69 (QVLQKKGYLQKEVT) the chain is on the cytoplasmic side. A helical membrane pass occupies residues 70–89 (DHMVSLACSDILVFLIGMPM). Residues 90-109 (EFYSIIWNPLTTPSYALSCK) lie on the Extracellular side of the membrane. Residues 110-131 (LHTFLFETCSYATLLHVLTLSF) traverse the membrane as a helical segment. The Cytoplasmic portion of the chain corresponds to 132-151 (ERYIAICHPFKYKAVSGPRQ). Residues 152-172 (VKLLIGFVWVTSALVALPLLF) traverse the membrane as a helical segment. Topologically, residues 173-217 (AMGIEYPLVNVPTHKGLNCNLSRTRHHDEPGNSNMSICTNLSNRW) are extracellular. 2 N-linked (GlcNAc...) asparagine glycosylation sites follow: asparagine 192 and asparagine 206. The helical transmembrane segment at 218–242 (EVFQSSIFGAFAVYLVVLASVAFMC) threads the bilayer. Topologically, residues 243–283 (WNMMKVLMKSKQGTLAGTGPQLQLRKSESEESRTARRQTII) are cytoplasmic. A helical membrane pass occupies residues 284–305 (FLRLIVVTLAVCWMPNQIRRIM). Over 306–323 (AAAKPKHDWTRTYFRAYM) the chain is Extracellular. The helical transmembrane segment at 324–344 (ILLPFSDTFFYLSSVVNPLLY) threads the bilayer. Residues 345–456 (NVSSQQFRKV…TENSLQEQEV (112 aa)) are Cytoplasmic-facing. Phosphoserine is present on serine 397. The disordered stretch occupies residues 415-456 (FQTEAKPGEAKPQPLSPESPQTGSETKPAGSTTENSLQEQEV). Residues 430–456 (SPESPQTGSETKPAGSTTENSLQEQEV) show a composition bias toward polar residues.

Belongs to the G-protein coupled receptor 1 family. Interacts with HTR1A. Interacts with GALR1. As to expression, expression is detected in septumamygdala, parietal cells, enterocytes, neurons and pancreas, in peripheral organs such as the duodenum and kidney but not in the pituitary and hypothalamus.

The protein resides in the cell membrane. Its function is as follows. Zinc-sensing receptor that can sense changes in extracellular Zn(2+), mediate Zn(2+) signal transmission, and participates in the regulation of numerous physiological processes including glucose homeostasis regulation, gastrointestinal mobility, hormone secretion and cell death. Activation by Zn(2+) in keratinocytes increases the intracellular concentration of Ca(2+) and activates the ERK/MAPK and PI3K/AKT signaling pathways leading to epithelial repair. Plays an essential role in normal wound healing by inducing the production of cytokines including the major inflammatory cytokine IL6 via the PKC/MAPK/CEBPB pathway. Regulates adipose tissue metabolism, especially lipolysis, and regulates the function of lipases, such as hormone-sensitive lipase and adipose triglyceride lipase. Plays a role in the inhibition of cell death and protects against oxidative, endoplasmic reticulum and mitochondrial stress by inducing secretion of the cytoprotective pigment epithelium-derived growth factor (PEDF) and probably other protective transcripts in a GNA13/RHOA/SRE-dependent manner. Forms dynamic heteroreceptor complexes with HTR1A and GALR1 depending on cell type or specific physiological states, resulting in signaling diversity: HTR1A-GPR39 shows additive increase in signaling along the serum response element (SRE) and NF-kappa-B pathways while GALR1 acts as an antagonist blocking SRE. This Mus musculus (Mouse) protein is G-protein coupled receptor 39 (Gpr39).